The following is a 40-amino-acid chain: Large ribosomal subunit protein bL36 (40 aa).

Belongs to the bacterial ribosomal protein bL36 family.

This Corynebacterium urealyticum (strain ATCC 43042 / DSM 7109) protein is Large ribosomal subunit protein bL36.